A 371-amino-acid polypeptide reads, in one-letter code: Glycosyltransferase 8 domain-containing protein 1 (371 aa).

Residues 1 to 5 (MSFRK) lie on the Cytoplasmic side of the membrane. Residues 6–26 (VTIIIWALAVILFLLALHHNF) traverse the membrane as a helical; Signal-anchor for type II membrane protein segment. At 27-371 (LSLSSLLRND…RRHMDTSNIK (345 aa)) the chain is on the lumenal side. A glycan (N-linked (GlcNAc...) asparagine) is linked at Asn-257.

The protein belongs to the glycosyltransferase 8 family.

It localises to the membrane. The chain is Glycosyltransferase 8 domain-containing protein 1 (Glt8d1) from Rattus norvegicus (Rat).